The sequence spans 131 residues: SPbeta prophage-derived uncharacterized protein YomZ (131 aa).

This chain is SPbeta prophage-derived uncharacterized protein YomZ (yomZ), found in Bacillus subtilis (strain 168).